A 446-amino-acid polypeptide reads, in one-letter code: Glucose-6-phosphate isomerase (446 aa).

Glu-287 functions as the Proton donor in the catalytic mechanism. Residues His-308 and Lys-422 contribute to the active site.

It belongs to the GPI family.

It localises to the cytoplasm. The enzyme catalyses alpha-D-glucose 6-phosphate = beta-D-fructose 6-phosphate. The protein operates within carbohydrate biosynthesis; gluconeogenesis. It participates in carbohydrate degradation; glycolysis; D-glyceraldehyde 3-phosphate and glycerone phosphate from D-glucose: step 2/4. Functionally, catalyzes the reversible isomerization of glucose-6-phosphate to fructose-6-phosphate. The chain is Glucose-6-phosphate isomerase from Lactobacillus helveticus (strain DPC 4571).